Reading from the N-terminus, the 358-residue chain is Peptide chain release factor 1 (358 aa).

At glutamine 233 the chain carries N5-methylglutamine.

This sequence belongs to the prokaryotic/mitochondrial release factor family. Methylated by PrmC. Methylation increases the termination efficiency of RF1.

Its subcellular location is the cytoplasm. In terms of biological role, peptide chain release factor 1 directs the termination of translation in response to the peptide chain termination codons UAG and UAA. This Lachnoclostridium phytofermentans (strain ATCC 700394 / DSM 18823 / ISDg) (Clostridium phytofermentans) protein is Peptide chain release factor 1.